Here is a 111-residue protein sequence, read N- to C-terminus: Large ribosomal subunit protein uL22 (111 aa).

This sequence belongs to the universal ribosomal protein uL22 family. As to quaternary structure, part of the 50S ribosomal subunit.

In terms of biological role, this protein binds specifically to 23S rRNA; its binding is stimulated by other ribosomal proteins, e.g. L4, L17, and L20. It is important during the early stages of 50S assembly. It makes multiple contacts with different domains of the 23S rRNA in the assembled 50S subunit and ribosome. The globular domain of the protein is located near the polypeptide exit tunnel on the outside of the subunit, while an extended beta-hairpin is found that lines the wall of the exit tunnel in the center of the 70S ribosome. The polypeptide is Large ribosomal subunit protein uL22 (Mycoplasma capricolum subsp. capricolum (strain California kid / ATCC 27343 / NCTC 10154)).